The sequence spans 496 residues: Probable cytosol aminopeptidase (496 aa).

Residues K266 and D271 each contribute to the Mn(2+) site. Residue K278 is part of the active site. Mn(2+) is bound by residues D289, D348, and E350. R352 is a catalytic residue.

It belongs to the peptidase M17 family. It depends on Mn(2+) as a cofactor.

Its subcellular location is the cytoplasm. It carries out the reaction Release of an N-terminal amino acid, Xaa-|-Yaa-, in which Xaa is preferably Leu, but may be other amino acids including Pro although not Arg or Lys, and Yaa may be Pro. Amino acid amides and methyl esters are also readily hydrolyzed, but rates on arylamides are exceedingly low.. The catalysed reaction is Release of an N-terminal amino acid, preferentially leucine, but not glutamic or aspartic acids.. In terms of biological role, presumably involved in the processing and regular turnover of intracellular proteins. Catalyzes the removal of unsubstituted N-terminal amino acids from various peptides. In Pseudomonas syringae pv. tomato (strain ATCC BAA-871 / DC3000), this protein is Probable cytosol aminopeptidase.